The sequence spans 351 residues: O-methyltransferase apf6 (351 aa).

S-adenosyl-L-methionine contacts are provided by residues 231 to 232 (GG), 279 to 280 (NF), and Arg295. Catalysis depends on His299, which acts as the Proton acceptor.

Belongs to the class I-like SAM-binding methyltransferase superfamily. Cation-independent O-methyltransferase family.

It functions in the pathway secondary metabolite biosynthesis. O-methyltransferase; part of the gene cluster that mediates the biosynthesis of the cyclic tetrapeptide apicidin F (APF). The non-ribosomal peptide synthetase apf1 incorporates four different amino acids to produce apicidin F: L-phenylalanine, D-pipecolic acid (D-pip), N-methoxy-L-tryptophan and L-2-aminooctanedioic acid. L-Phenylalanine is the only proteinogenic amino acid directly used by apf1. The 3 other apf1 substrates are non-proteinogenic and have to be modified by other enzymes of the cluster. Lysine is converted to delta-1-pyrroline-5-carboxylate (P5C) which is reduced to L-pipecolic acid (L-pip) by apf3. L-pip is epimerized to D-pip, probably by apf1 activity, prior to incorporation. L-Tryptophan is N-oxidyzed by one of the cytochrome P450 monooxygenases (apf7 or apf8), and further methylated at the hydroxy group by the O-methyltransferase apf6 to yield N-methoxy-L-tryptophan. The synthesis of the fourth apf1 substrate is more complex. The fatty acid synthase apf5 is involved in the synthesis of the octanoic acid backbone of L-2-aminooctanedioic acid by fixing one acetyl-CoA unit and three malonyl-CoA units. Then one of the cytochrome P450 monooxygenases (apf7 or apf8) may oxidize this backbone to 2-oxooctanoic acid. The aminotransferase apf4 is predicted to catalyze the exchange of the keto group with an amino group. The next step would be the oxidation of 2-aminooctanoic acid by one of the cytochrome P450 monooxygenases (apf7 or apf8). The last step is the oxidation of 2-amino-8-hydroxyoctanoic acid to 2-aminooctanedioic acid is catalyzed by the FAD-dependent monooxygenase apf9. The polypeptide is O-methyltransferase apf6 (Gibberella fujikuroi (strain CBS 195.34 / IMI 58289 / NRRL A-6831) (Bakanae and foot rot disease fungus)).